A 389-amino-acid polypeptide reads, in one-letter code: P2X purinoceptor 4a (389 aa).

At 1–36 (MSESVGCCDSVSQCFFDYYTSKILIIRSKKVGTLNR) the chain is on the cytoplasmic side. A helical transmembrane segment spans residues 37–57 (FTQALVIAYVIGYVCVYNKGY). Topologically, residues 58 to 343 (QDTDTVLSSV…NIIPTLLNMG (286 aa)) are extracellular. Residues K70 and K72 each coordinate ATP. CTP-binding residues include K70 and K72. N-linked (GlcNAc...) asparagine glycosylation is found at N78 and N113. 3 disulfide bridges follow: C119–C168, C129–C152, and C135–C162. R143 contacts CTP. Residue N187 is glycosylated (N-linked (GlcNAc...) asparagine). ATP-binding residues include T189 and L191. T189 contacts CTP. N213 carries N-linked (GlcNAc...) asparagine glycosylation. Cystine bridges form between C220-C230 and C264-C273. Residues N296, R298, and K316 each contribute to the ATP site. 3 residues coordinate CTP: N296, R298, and K316. A helical membrane pass occupies residues 344 to 364 (AGLALLGLVNVICDWIVLTFM). Over 365–389 (KRKQHYKEQKYTYVDDFGLLHNEDK) the chain is Cytoplasmic.

This sequence belongs to the P2X receptor family. As to quaternary structure, functional P2XRs are organized as homomeric and heteromeric trimers. Forms homotrimer.

Its subcellular location is the cell membrane. The protein localises to the lysosome membrane. It catalyses the reaction K(+)(in) = K(+)(out). It carries out the reaction Na(+)(in) = Na(+)(out). The enzyme catalyses Ca(2+)(in) = Ca(2+)(out). With respect to regulation, activated by ATP. pH-dependent and inhibited by acidic pH. In terms of biological role, ATP-gated nonselective transmembrane cation channel permeable to potassium, sodium and calcium. CTP, but not GTP or UTP, functions as a weak affinity agonist for P2RX4. Activated by extracellularly released ATP, it plays multiple role in immunity and central nervous system physiology. Could also function as an ATP-gated cation channel of lysosomal membranes. This chain is P2X purinoceptor 4a (p2rx4a), found in Danio rerio (Zebrafish).